The sequence spans 171 residues: Lipoprotein signal peptidase (171 aa).

3 helical membrane passes run 7 to 27 (GLLALVLTLILDQATKLGLYF), 64 to 84 (IGRWLLVALSLAAAIGLGLWM), and 88 to 108 (TSRLLGIALGLIVGGALGNAI). Active-site residues include Asp118 and Asp136. The chain crosses the membrane as a helical span at residues 128-148 (SWYVFNVADAAIVAGVIGLIL).

Belongs to the peptidase A8 family.

It localises to the cell inner membrane. It carries out the reaction Release of signal peptides from bacterial membrane prolipoproteins. Hydrolyzes -Xaa-Yaa-Zaa-|-(S,diacylglyceryl)Cys-, in which Xaa is hydrophobic (preferably Leu), and Yaa (Ala or Ser) and Zaa (Gly or Ala) have small, neutral side chains.. It participates in protein modification; lipoprotein biosynthesis (signal peptide cleavage). Its function is as follows. This protein specifically catalyzes the removal of signal peptides from prolipoproteins. This chain is Lipoprotein signal peptidase, found in Methylobacterium radiotolerans (strain ATCC 27329 / DSM 1819 / JCM 2831 / NBRC 15690 / NCIMB 10815 / 0-1).